Here is a 1354-residue protein sequence, read N- to C-terminus: Phosphoribosylformylglycinamidine synthase (1354 aa).

ATP is bound by residues 327–338, 407–409, and alanine 714; these read GATTGTGGRLRD and SGF. Mg(2+) contacts are provided by aspartate 715, glutamate 754, asparagine 758, and aspartate 918. Serine 920 lines the ATP pocket. Residues 1087 to 1337 enclose the Glutamine amidotransferase type-1 domain; that stretch reads VAVLREEGVN…EVSPTQSESP (251 aa). The Nucleophile role is filled by cysteine 1180. Catalysis depends on residues histidine 1310 and glutamate 1312.

In the N-terminal section; belongs to the FGAMS family.

It carries out the reaction N(2)-formyl-N(1)-(5-phospho-beta-D-ribosyl)glycinamide + L-glutamine + ATP + H2O = 2-formamido-N(1)-(5-O-phospho-beta-D-ribosyl)acetamidine + L-glutamate + ADP + phosphate + H(+). Its pathway is purine metabolism; IMP biosynthesis via de novo pathway; 5-amino-1-(5-phospho-D-ribosyl)imidazole from N(2)-formyl-N(1)-(5-phospho-D-ribosyl)glycinamide: step 1/2. Phosphoribosylformylglycinamidine synthase involved in the purines biosynthetic pathway. Catalyzes the ATP-dependent conversion of formylglycinamide ribonucleotide (FGAR) and glutamine to yield formylglycinamidine ribonucleotide (FGAM) and glutamate. Because of its role in metabolisms, is involved in sleep regulation. The sequence is that of Phosphoribosylformylglycinamidine synthase from Drosophila melanogaster (Fruit fly).